A 291-amino-acid polypeptide reads, in one-letter code: Protein/nucleic acid deglycase HchA (291 aa).

Positions 1–18 (MSNERDTSRTPTPDHAEH) are enriched in basic and acidic residues. A disordered region spans residues 1–24 (MSNERDTSRTPTPDHAEHNAFFPS). Cys188 acts as the Nucleophile in catalysis.

The protein belongs to the peptidase C56 family. HchA subfamily.

The protein localises to the cytoplasm. It catalyses the reaction N(omega)-(1-hydroxy-2-oxopropyl)-L-arginyl-[protein] + H2O = lactate + L-arginyl-[protein] + H(+). It carries out the reaction N(6)-(1-hydroxy-2-oxopropyl)-L-lysyl-[protein] + H2O = lactate + L-lysyl-[protein] + H(+). The enzyme catalyses S-(1-hydroxy-2-oxopropyl)-L-cysteinyl-[protein] + H2O = lactate + L-cysteinyl-[protein] + H(+). The catalysed reaction is N(omega)-(1-hydroxy-2-oxoethyl)-L-arginyl-[protein] + H2O = L-arginyl-[protein] + glycolate + H(+). It catalyses the reaction N(6)-(1-hydroxy-2-oxoethyl)-L-lysyl-[protein] + H2O = glycolate + L-lysyl-[protein] + H(+). It carries out the reaction S-(1-hydroxy-2-oxoethyl)-L-cysteinyl-[protein] + H2O = glycolate + L-cysteinyl-[protein] + H(+). The enzyme catalyses N(2)-(1-hydroxy-2-oxopropyl)-dGTP + H2O = lactate + dGTP + H(+). The catalysed reaction is N(2)-(1-hydroxy-2-oxopropyl)-GTP + H2O = lactate + GTP + H(+). It catalyses the reaction N(2)-(1-hydroxy-2-oxopropyl)-GDP + H2O = lactate + GDP + H(+). It carries out the reaction N(2)-(1-hydroxy-2-oxopropyl)-GMP + H2O = lactate + GMP + H(+). The enzyme catalyses N(2)-(1-hydroxy-2-oxoethyl)-dGTP + H2O = dGTP + glycolate + H(+). The catalysed reaction is N(2)-(1-hydroxy-2-oxoethyl)-GTP + H2O = glycolate + GTP + H(+). It catalyses the reaction N(2)-(1-hydroxy-2-oxoethyl)-GDP + H2O = glycolate + GDP + H(+). It carries out the reaction N(2)-(1-hydroxy-2-oxoethyl)-GMP + H2O = glycolate + GMP + H(+). The enzyme catalyses an N(2)-(1-hydroxy-2-oxopropyl)-guanosine in RNA + H2O = a guanosine in RNA + lactate + H(+). The catalysed reaction is an N(2)-(1-hydroxy-2-oxopropyl)-2'-deoxyguanosine in DNA + H2O = a 2'-deoxyguanosine in DNA + lactate + H(+). It catalyses the reaction an N(2)-(1-hydroxy-2-oxoethyl)-guanosine in RNA + H2O = a guanosine in RNA + glycolate + H(+). It carries out the reaction an N(2)-(1-hydroxy-2-oxoethyl)-2'-deoxyguanosine in DNA + H2O = a 2'-deoxyguanosine in DNA + glycolate + H(+). Its function is as follows. Protein and nucleotide deglycase that catalyzes the deglycation of the Maillard adducts formed between amino groups of proteins or nucleotides and reactive carbonyl groups of glyoxals. Thus, functions as a protein deglycase that repairs methylglyoxal- and glyoxal-glycated proteins, and releases repaired proteins and lactate or glycolate, respectively. Deglycates cysteine, arginine and lysine residues in proteins, and thus reactivates these proteins by reversing glycation by glyoxals. Acts on early glycation intermediates (hemithioacetals and aminocarbinols), preventing the formation of Schiff bases and advanced glycation endproducts (AGE). Also functions as a nucleotide deglycase able to repair glycated guanine in the free nucleotide pool (GTP, GDP, GMP, dGTP) and in DNA and RNA. Is thus involved in a major nucleotide repair system named guanine glycation repair (GG repair), dedicated to reversing methylglyoxal and glyoxal damage via nucleotide sanitization and direct nucleic acid repair. Plays an important role in protecting cells from carbonyl stress. The sequence is that of Protein/nucleic acid deglycase HchA from Pseudomonas aeruginosa (strain UCBPP-PA14).